The chain runs to 494 residues: Glutamyl-tRNA(Gln) amidotransferase subunit A (494 aa).

Active-site charge relay system residues include K79 and S159. S183 (acyl-ester intermediate) is an active-site residue.

This sequence belongs to the amidase family. GatA subfamily. As to quaternary structure, heterotrimer of A, B and C subunits.

It catalyses the reaction L-glutamyl-tRNA(Gln) + L-glutamine + ATP + H2O = L-glutaminyl-tRNA(Gln) + L-glutamate + ADP + phosphate + H(+). Functionally, allows the formation of correctly charged Gln-tRNA(Gln) through the transamidation of misacylated Glu-tRNA(Gln) in organisms which lack glutaminyl-tRNA synthetase. The reaction takes place in the presence of glutamine and ATP through an activated gamma-phospho-Glu-tRNA(Gln). The polypeptide is Glutamyl-tRNA(Gln) amidotransferase subunit A (Bartonella henselae (strain ATCC 49882 / DSM 28221 / CCUG 30454 / Houston 1) (Rochalimaea henselae)).